The sequence spans 391 residues: Carbamoyl phosphate synthase small chain (391 aa).

The CPSase stretch occupies residues 1–199; that stretch reads MVRISGFCCA…TWEFIEGPTT (199 aa). Residues Ser-61, Gly-251, and Gly-253 each coordinate L-glutamine. The Glutamine amidotransferase type-1 domain maps to 203-388; sequence TVVAIDFGVK…VALMRDRQPT (186 aa). Cys-279 acts as the Nucleophile in catalysis. L-glutamine is bound by residues Leu-280, Gln-283, Asn-319, Gly-321, and Phe-322. Active-site residues include His-361 and Glu-363.

The protein belongs to the CarA family. As to quaternary structure, composed of two chains; the small (or glutamine) chain promotes the hydrolysis of glutamine to ammonia, which is used by the large (or ammonia) chain to synthesize carbamoyl phosphate. Tetramer of heterodimers (alpha,beta)4.

It carries out the reaction hydrogencarbonate + L-glutamine + 2 ATP + H2O = carbamoyl phosphate + L-glutamate + 2 ADP + phosphate + 2 H(+). It catalyses the reaction L-glutamine + H2O = L-glutamate + NH4(+). It functions in the pathway amino-acid biosynthesis; L-arginine biosynthesis; carbamoyl phosphate from bicarbonate: step 1/1. The protein operates within pyrimidine metabolism; UMP biosynthesis via de novo pathway; (S)-dihydroorotate from bicarbonate: step 1/3. Small subunit of the glutamine-dependent carbamoyl phosphate synthetase (CPSase). CPSase catalyzes the formation of carbamoyl phosphate from the ammonia moiety of glutamine, carbonate, and phosphate donated by ATP, constituting the first step of 2 biosynthetic pathways, one leading to arginine and/or urea and the other to pyrimidine nucleotides. The small subunit (glutamine amidotransferase) binds and cleaves glutamine to supply the large subunit with the substrate ammonia. The polypeptide is Carbamoyl phosphate synthase small chain (Synechococcus sp. (strain ATCC 27144 / PCC 6301 / SAUG 1402/1) (Anacystis nidulans)).